The primary structure comprises 657 residues: Broad substrate specificity ATP-binding cassette transporter ABCG2 (657 aa).

The interval 1-24 is disordered; that stretch reads MSSSNDHVLVPMSQRNNNGLPRTN. The Cytoplasmic portion of the chain corresponds to 1–393; it reads MSSSNDHVLV…SFKNLLGNPQ (393 aa). Over residues 13–24 the composition is skewed to polar residues; it reads SQRNNNGLPRTN. Residues 48–285 enclose the ABC transporter domain; the sequence is VKSGFLVRKT…FASAGYHCEP (238 aa). Residues 79–86, 183–189, glutamate 210, and histidine 242 contribute to the ATP site; these read GPTGGGKS and RGISGGE. Positions 389 to 653 constitute an ABC transmembrane type-2 domain; it reads LGNPQASVAQ…TIAYLKLLFL (265 aa). The chain crosses the membrane as a helical span at residues 394-414; the sequence is ASVAQLIVTVILGLIIGAIYF. The Extracellular segment spans residues 415–428; it reads DLKYDAAGMQNRAG. A helical transmembrane segment spans residues 429–449; sequence VLFFLTTNQCFSSVSAVELFV. Over 450-477 the chain is Cytoplasmic; sequence VEKKLFIHEYISGYYRVSSYFFGKVMSD. A helical transmembrane segment spans residues 478–498; it reads LLPMRFLPSVIFTCVLYFMLG. Over 499–506 the chain is Extracellular; it reads LKKTVDAF. The helical transmembrane segment at 507–527 threads the bilayer; that stretch reads FIMMFTLIMVAYTASSMALAI. Residues 528–535 lie on the Cytoplasmic side of the membrane; the sequence is ATGQSVVS. The helical transmembrane segment at 536-556 threads the bilayer; the sequence is VATLLMTIAFVFMMLFSGLLV. At 557–632 the chain is on the extracellular side; it reads NLRTIGPWLS…LSPWGLWKNH (76 aa). Cysteine 592 and cysteine 610 are joined by a disulfide. N-linked (GlcNAc...) asparagine glycosylation is found at asparagine 596 and asparagine 600. A helical transmembrane segment spans residues 633–653; it reads VALACMIIIFLTIAYLKLLFL. At 654–657 the chain is on the cytoplasmic side; that stretch reads KKYS.

It belongs to the ABC transporter superfamily. ABCG family. Eye pigment precursor importer (TC 3.A.1.204) subfamily. Homodimer; disulfide-linked. The minimal functional unit is a homodimer, but the major oligomeric form in plasma membrane is a homotetramer with possibility of higher order oligomerization up to homododecamers. N-glycosylated. Glycosylation-deficient ABCG2 is normally expressed and functional. In terms of processing, phosphorylated. Phosphorylation may regulate the localization to the plasma membrane, the homooligomerization and therefore, the activity of the transporter. As to expression, highly expressed in kidney. Lower expression in liver, colon, heart, spleen, and placenta. Expressed in mammary gland. Expressed in intestinal villi and renal proximal tubules, hepatic bile canalicular membranes, and placental labyrinth cells (at protein level).

It localises to the cell membrane. It is found in the apical cell membrane. The protein localises to the mitochondrion membrane. It catalyses the reaction ATP + H2O + xenobioticSide 1 = ADP + phosphate + xenobioticSide 2.. It carries out the reaction riboflavin(in) + ATP + H2O = riboflavin(out) + ADP + phosphate + H(+). The catalysed reaction is pheophorbide a(in) + ATP + H2O = pheophorbide a(out) + ADP + phosphate + H(+). The enzyme catalyses urate(in) + ATP + H2O = urate(out) + ADP + phosphate + H(+). It catalyses the reaction indoxyl sulfate(in) + ATP + H2O = indoxyl sulfate(out) + ADP + phosphate + H(+). It carries out the reaction sphing-4-enine 1-phosphate(in) + ATP + H2O = sphing-4-enine 1-phosphate(out) + ADP + phosphate + H(+). The catalysed reaction is estrone 3-sulfate(in) + ATP + H2O = estrone 3-sulfate(out) + ADP + phosphate + H(+). The enzyme catalyses dehydroepiandrosterone 3-sulfate(in) + ATP + H2O = dehydroepiandrosterone 3-sulfate(out) + ADP + phosphate + H(+). It catalyses the reaction 4-methylumbelliferone sulfate(in) + ATP + H2O = 4-methylumbelliferone sulfate(out) + ADP + phosphate + H(+). It carries out the reaction 5,7-dimethyl-2-methylamino-4-(3-pyridylmethyl)-1,3-benzothiazol-6-yl beta-D-glucuronate(in) + ATP + H2O = 5,7-dimethyl-2-methylamino-4-(3-pyridylmethyl)-1,3-benzothiazol-6-yl beta-D-glucuronate(out) + ADP + phosphate + H(+). The catalysed reaction is 4-methylumbelliferone beta-D-glucuronate(in) + ATP + H2O = 4-methylumbelliferone beta-D-glucuronate(out) + ADP + phosphate + H(+). The enzyme catalyses 5,7-dimethyl-2-methylamino-4-(3-pyridylmethyl)-1,3-benzothiazol-6-yl sulfate(in) + ATP + H2O = 5,7-dimethyl-2-methylamino-4-(3-pyridylmethyl)-1,3-benzothiazol-6-yl sulfate(out) + ADP + phosphate + H(+). It catalyses the reaction 17beta-estradiol 17-O-(beta-D-glucuronate)(in) + ATP + H2O = 17beta-estradiol 17-O-(beta-D-glucuronate)(out) + ADP + phosphate + H(+). It carries out the reaction methotrexate(in) + ATP + H2O = methotrexate(out) + ADP + phosphate + H(+). The catalysed reaction is itaconate(in) + ATP + H2O = itaconate(out) + ADP + phosphate + H(+). Its activity is regulated as follows. Specifically inhibited by the fungal toxin fumitremorgin C and Ko143. Functionally, broad substrate specificity ATP-dependent transporter of the ATP-binding cassette (ABC) family that actively extrudes a wide variety of physiological compounds, dietary toxins and xenobiotics from cells. Involved in porphyrin homeostasis, mediating the export of protoporphyrin IX (PPIX) from both mitochondria to cytosol and cytosol to extracellular space, it also functions in the cellular export of heme. Also mediates the efflux of sphingosine-1-P from cells. Acts as a urate exporter functioning in both renal and extrarenal urate excretion. In kidney, it also functions as a physiological exporter of the uremic toxin indoxyl sulfate. Also involved in the excretion of steroids like estrone 3-sulfate/E1S, 3beta-sulfooxy-androst-5-en-17-one/DHEAS, and other sulfate conjugates. Mediates the secretion of the riboflavin and biotin vitamins into milk. Extrudes pheophorbide a, a phototoxic porphyrin catabolite of chlorophyll, reducing its bioavailability. Plays an important role in the exclusion of xenobiotics from the brain. It confers to cells a resistance to multiple drugs and other xenobiotics including mitoxantrone, pheophorbide, camptothecin, methotrexate, azidothymidine, and the anthracyclines daunorubicin and doxorubicin, through the control of their efflux. In placenta, it limits the penetration of drugs from the maternal plasma into the fetus. May play a role in early stem cell self-renewal by blocking differentiation. In inflammatory macrophages, exports itaconate from the cytosol to the extracellular compartment and limits the activation of TFEB-dependent lysosome biogenesis involved in antibacterial innate immune response. This Mus musculus (Mouse) protein is Broad substrate specificity ATP-binding cassette transporter ABCG2 (Abcg2).